Reading from the N-terminus, the 382-residue chain is Dual-specificity RNA methyltransferase RlmN (382 aa).

The active-site Proton acceptor is Glu-95. One can recognise a Radical SAM core domain in the interval 101 to 348 (EDDRGTLCIS…TTVRKTRGDD (248 aa)). A disulfide bond links Cys-108 and Cys-353. Positions 115, 119, and 122 each coordinate [4Fe-4S] cluster. Residues 179–180 (GE), Ser-211, 233–235 (SLH), and Asn-310 contribute to the S-adenosyl-L-methionine site. Cys-353 serves as the catalytic S-methylcysteine intermediate.

The protein belongs to the radical SAM superfamily. RlmN family. It depends on [4Fe-4S] cluster as a cofactor.

Its subcellular location is the cytoplasm. The catalysed reaction is adenosine(2503) in 23S rRNA + 2 reduced [2Fe-2S]-[ferredoxin] + 2 S-adenosyl-L-methionine = 2-methyladenosine(2503) in 23S rRNA + 5'-deoxyadenosine + L-methionine + 2 oxidized [2Fe-2S]-[ferredoxin] + S-adenosyl-L-homocysteine. The enzyme catalyses adenosine(37) in tRNA + 2 reduced [2Fe-2S]-[ferredoxin] + 2 S-adenosyl-L-methionine = 2-methyladenosine(37) in tRNA + 5'-deoxyadenosine + L-methionine + 2 oxidized [2Fe-2S]-[ferredoxin] + S-adenosyl-L-homocysteine. Functionally, specifically methylates position 2 of adenine 2503 in 23S rRNA and position 2 of adenine 37 in tRNAs. m2A2503 modification seems to play a crucial role in the proofreading step occurring at the peptidyl transferase center and thus would serve to optimize ribosomal fidelity. In Bordetella pertussis (strain Tohama I / ATCC BAA-589 / NCTC 13251), this protein is Dual-specificity RNA methyltransferase RlmN.